Reading from the N-terminus, the 445-residue chain is Probable carboxypeptidase UREG_07869 (445 aa).

Positions 1-17 (MKSLILTTLALLPLVSC) are cleaved as a signal peptide. Asp-165 contributes to the Zn(2+) binding site. The active-site Proton acceptor is Glu-197. Glu-198 is a binding site for Zn(2+).

This sequence belongs to the peptidase M20A family. The cofactor is Zn(2+).

It is found in the secreted. The protein is Probable carboxypeptidase UREG_07869 of Uncinocarpus reesii (strain UAMH 1704).